Reading from the N-terminus, the 368-residue chain is Carbamoyl phosphate synthase small chain (368 aa).

The interval 1-178 is CPSase; it reads MKAVLGLEDG…GAAGAWKGSG (178 aa). Ser45, Gly230, and Gly232 together coordinate L-glutamine. A Glutamine amidotransferase type-1 domain is found at 182–368; that stretch reads HAVVVDLGIK…KVVKVLGGGL (187 aa). The active-site Nucleophile is Cys257. L-glutamine is bound by residues Phe258, Gln261, Asn299, Gly301, and Tyr302. Active-site residues include His342 and Glu344.

Belongs to the CarA family. Composed of two chains; the small (or glutamine) chain promotes the hydrolysis of glutamine to ammonia, which is used by the large (or ammonia) chain to synthesize carbamoyl phosphate. Tetramer of heterodimers (alpha,beta)4.

It carries out the reaction hydrogencarbonate + L-glutamine + 2 ATP + H2O = carbamoyl phosphate + L-glutamate + 2 ADP + phosphate + 2 H(+). The catalysed reaction is L-glutamine + H2O = L-glutamate + NH4(+). The protein operates within amino-acid biosynthesis; L-arginine biosynthesis; carbamoyl phosphate from bicarbonate: step 1/1. It participates in pyrimidine metabolism; UMP biosynthesis via de novo pathway; (S)-dihydroorotate from bicarbonate: step 1/3. Functionally, small subunit of the glutamine-dependent carbamoyl phosphate synthetase (CPSase). CPSase catalyzes the formation of carbamoyl phosphate from the ammonia moiety of glutamine, carbonate, and phosphate donated by ATP, constituting the first step of 2 biosynthetic pathways, one leading to arginine and/or urea and the other to pyrimidine nucleotides. The small subunit (glutamine amidotransferase) binds and cleaves glutamine to supply the large subunit with the substrate ammonia. This chain is Carbamoyl phosphate synthase small chain, found in Methanosarcina mazei (strain ATCC BAA-159 / DSM 3647 / Goe1 / Go1 / JCM 11833 / OCM 88) (Methanosarcina frisia).